The chain runs to 122 residues: Large ribosomal subunit protein uL14c (122 aa).

This sequence belongs to the universal ribosomal protein uL14 family. In terms of assembly, part of the 50S ribosomal subunit.

Its subcellular location is the plastid. Binds to 23S rRNA. The protein is Large ribosomal subunit protein uL14c of Cuscuta obtusiflora (Peruvian dodder).